An 876-amino-acid polypeptide reads, in one-letter code: Alanine--tRNA ligase (876 aa).

Zn(2+) is bound by residues H565, H569, C667, and H671.

It belongs to the class-II aminoacyl-tRNA synthetase family. It depends on Zn(2+) as a cofactor.

It is found in the cytoplasm. It catalyses the reaction tRNA(Ala) + L-alanine + ATP = L-alanyl-tRNA(Ala) + AMP + diphosphate. Functionally, catalyzes the attachment of alanine to tRNA(Ala) in a two-step reaction: alanine is first activated by ATP to form Ala-AMP and then transferred to the acceptor end of tRNA(Ala). Also edits incorrectly charged Ser-tRNA(Ala) and Gly-tRNA(Ala) via its editing domain. This Staphylococcus aureus (strain bovine RF122 / ET3-1) protein is Alanine--tRNA ligase.